We begin with the raw amino-acid sequence, 239 residues long: Tetraspanin-9 (239 aa).

Residues 1 to 13 (MARGCLCCLKYMM) are Cytoplasmic-facing. Residues 14–34 (FLFNLIFWLCGCGLLGVGIWL) form a helical membrane-spanning segment. The Extracellular portion of the chain corresponds to 35–55 (SVSQGNFATFSPSFPSLSAAN). A helical membrane pass occupies residues 56–76 (LVIAIGTIVMVTGFLGCLGAI). Residues 77 to 85 (KENKCLLLS) are Cytoplasmic-facing. Residues 86–106 (FFIVLLVILLAELILLILFFV) traverse the membrane as a helical segment. At 107 to 203 (YMDKVNENAK…VKMWFDDNKH (97 aa)) the chain is on the extracellular side. Asparagine 180 carries an N-linked (GlcNAc...) asparagine glycan. The helical transmembrane segment at 204–224 (VLGTVGMCILIMQILGMAFSM) threads the bilayer. Residues 225–239 (TLFQHIHRTGKKYDA) are Cytoplasmic-facing.

The protein belongs to the tetraspanin (TM4SF) family. As to quaternary structure, found in a complex with GP6. Glycosylated. Expressed in megakaryocytes and platelets (at protein level).

The protein localises to the membrane. In Homo sapiens (Human), this protein is Tetraspanin-9 (TSPAN9).